A 224-amino-acid chain; its full sequence is Retinoschisin (224 aa).

A signal peptide spans 1 to 23 (MPHKIEGFFLLLLFGYEATLGLS). The region spanning 63-219 (CPYHKPLGFE…IAIRMELLEC (157 aa)) is the F5/8 type C domain. 2 disulfide bridges follow: Cys63-Cys219 and Cys110-Cys142.

As to quaternary structure, homooctamer of 4 homodimers; disulfide-linked. The homooctamer has a flat, cogwheel structure with a diameter of about 14 nm. Two stacked octamers can assemble to form a hexadecamer. Detected in the eye cup. Detected in retina, in the inner segment of the photoreceptors, the inner nuclear layer, the inner plexiform layer and the ganglion cell layer (at protein level). Restricted to the retina. At the mRNA level, detected only within the photoreceptor cell layer, most prominently within the inner segments of the photoreceptors. Undetectable in the inner plexiform layers and the inner nuclear layer.

Its subcellular location is the secreted. The protein resides in the cell membrane. Functionally, binds negatively charged membrane lipids, such as phosphatidylserine and phosphoinositides. May play a role in cell-cell adhesion processes in the retina, via homomeric interaction between octamers present on the surface of two neighboring cells. Required for normal structure and function of the retina. The sequence is that of Retinoschisin (Rs1) from Mus musculus (Mouse).